Reading from the N-terminus, the 456-residue chain is Elongator complex protein 4 (456 aa).

Positions 1-11 (MSFRKRGEILN) are enriched in basic and acidic residues. The segment at 1 to 91 (MSFRKRGEIL…SQPTTSTGSA (91 aa)) is disordered. An Omega-N-methylarginine modification is found at arginine 13. Residues 18 to 27 (RGPLLRGPPR) are compositionally biased toward low complexity. Basic and acidic residues predominate over residues 57–66 (NIADESKTKM). Residues 77–90 (PSPATSQPTTSTGS) are compositionally biased toward low complexity. Serine 222 carries the post-translational modification Phosphoserine. Residues 424–444 (EGSAASEQSHSHSHSDEISHN) form a disordered region. The span at 432 to 442 (SHSHSHSDEIS) shows a compositional bias: basic and acidic residues.

Belongs to the ELP4 family. Component of the elongator complex which consists of ELP1/IKI3, ELP2, ELP3, ELP4, ELP5/IKI1 and ELP6. The elongator complex is composed of two copies of the Elp123 subcomplex (composed of ELP1/IKI3, ELP2 and ELP3) and two copies of the Elp456 subcomplex (composed of ELP4, ELP5/IKI1 and ELP6). The Elp123 subcomplex forms a two-lobed scaffold, which binds the Elp456 subcomplex asymmetrically. In each lobe, ELP2 is tightly sandwiched between ELP1/IKI3 and ELP3. The Elp123 subcomplex binds tRNA through ELP1/IKI3 and ELP3 and can bind 2 tRNAs simultaneously. tRNA-binding by the Elp123 subcomplex induces conformational rearrangements which precisely position the targeted anticodon base in the active site. The Elp456 subcomplex binds tRNA and has ATPase activity. ELP4 interacts with KTI12.

It localises to the cytoplasm. The protein resides in the nucleus. It functions in the pathway tRNA modification; 5-methoxycarbonylmethyl-2-thiouridine-tRNA biosynthesis. Functionally, component of the elongator complex, a multiprotein complex which is required for multiple tRNA modifications, including mcm5U (5-methoxycarbonylmethyl uridine), mcm5s2U (5-methoxycarbonylmethyl-2-thiouridine), and ncm5U (5-carbamoylmethyl uridine). The elongator complex catalyzes formation of carboxymethyluridine in the wobble base at position 34 in tRNAs. It functions as a gamma-toxin target (TOT); disruption of the complex confers resistance to Kluyveromyces lactis toxin zymocin (pGKL1 killer toxin). May also be involved in sensitivity to Pichia inositovora toxin. In Saccharomyces cerevisiae (strain ATCC 204508 / S288c) (Baker's yeast), this protein is Elongator complex protein 4.